We begin with the raw amino-acid sequence, 324 residues long: Leucine carboxyl methyltransferase 1 (324 aa).

S-adenosyl-L-methionine is bound by residues R74, G101, D128, 172-173 (DL), and E196.

Belongs to the methyltransferase superfamily. LCMT family.

It carries out the reaction [phosphatase 2A protein]-C-terminal L-leucine + S-adenosyl-L-methionine = [phosphatase 2A protein]-C-terminal L-leucine methyl ester + S-adenosyl-L-homocysteine. Methylates the carboxyl group of the C-terminal leucine residue of protein phosphatase 2A catalytic subunits to form alpha-leucine ester residues. The chain is Leucine carboxyl methyltransferase 1 (PPM1) from Yarrowia lipolytica (strain CLIB 122 / E 150) (Yeast).